The chain runs to 364 residues: tRNA 2-selenouridine synthase (364 aa).

Residues 14-137 (LIADTPIIDV…LRQTAIQATI (124 aa)) enclose the Rhodanese domain. The active-site S-selanylcysteine intermediate is Cys97.

Belongs to the SelU family. As to quaternary structure, monomer.

It carries out the reaction 5-methylaminomethyl-2-thiouridine(34) in tRNA + selenophosphate + (2E)-geranyl diphosphate + H2O + H(+) = 5-methylaminomethyl-2-selenouridine(34) in tRNA + (2E)-thiogeraniol + phosphate + diphosphate. The enzyme catalyses 5-methylaminomethyl-2-thiouridine(34) in tRNA + (2E)-geranyl diphosphate = 5-methylaminomethyl-S-(2E)-geranyl-thiouridine(34) in tRNA + diphosphate. The catalysed reaction is 5-methylaminomethyl-S-(2E)-geranyl-thiouridine(34) in tRNA + selenophosphate + H(+) = 5-methylaminomethyl-2-(Se-phospho)selenouridine(34) in tRNA + (2E)-thiogeraniol. It catalyses the reaction 5-methylaminomethyl-2-(Se-phospho)selenouridine(34) in tRNA + H2O = 5-methylaminomethyl-2-selenouridine(34) in tRNA + phosphate. Involved in the post-transcriptional modification of the uridine at the wobble position (U34) of tRNA(Lys), tRNA(Glu) and tRNA(Gln). Catalyzes the conversion of 2-thiouridine (S2U-RNA) to 2-selenouridine (Se2U-RNA). Acts in a two-step process involving geranylation of 2-thiouridine (S2U) to S-geranyl-2-thiouridine (geS2U) and subsequent selenation of the latter derivative to 2-selenouridine (Se2U) in the tRNA chain. This chain is tRNA 2-selenouridine synthase, found in Escherichia fergusonii (strain ATCC 35469 / DSM 13698 / CCUG 18766 / IAM 14443 / JCM 21226 / LMG 7866 / NBRC 102419 / NCTC 12128 / CDC 0568-73).